A 284-amino-acid chain; its full sequence is Tegument protein UL23 (284 aa).

The protein belongs to the herpesviridae US22 family. As to quaternary structure, interacts with host NMI; this interaction inhibits NMI interaction with STAT1.

It localises to the virion tegument. Its subcellular location is the host cytoplasm. In terms of biological role, plays a role in the inhibition of host innate immune response by disrupting the interaction between NMI and STAT1. In turn, NMI-mediated transcription of interferon-gamma stimulated genes is inhibited. This Homo sapiens (Human) protein is Tegument protein UL23 (UL23).